The primary structure comprises 679 residues: UvrABC system protein B (679 aa).

The region spanning 25 to 176 (YGVNQGKQYQ…NVRESLRELV (152 aa)) is the Helicase ATP-binding domain. Position 38 to 45 (38 to 45 (GATGTGKT)) interacts with ATP. The Beta-hairpin motif lies at 91–114 (YYDYYQPEAYVPVSDTYIAKTSSV). The region spanning 429 to 591 (QIDDLLDEIR…IIPKPAGKKP (163 aa)) is the Helicase C-terminal domain. One can recognise a UVR domain in the interval 639–674 (PEIIDKLEGKMNLAAEELDFEQAAKLRDRIRQLRKK).

It belongs to the UvrB family. As to quaternary structure, forms a heterotetramer with UvrA during the search for lesions. Interacts with UvrC in an incision complex.

The protein localises to the cytoplasm. In terms of biological role, the UvrABC repair system catalyzes the recognition and processing of DNA lesions. A damage recognition complex composed of 2 UvrA and 2 UvrB subunits scans DNA for abnormalities. Upon binding of the UvrA(2)B(2) complex to a putative damaged site, the DNA wraps around one UvrB monomer. DNA wrap is dependent on ATP binding by UvrB and probably causes local melting of the DNA helix, facilitating insertion of UvrB beta-hairpin between the DNA strands. Then UvrB probes one DNA strand for the presence of a lesion. If a lesion is found the UvrA subunits dissociate and the UvrB-DNA preincision complex is formed. This complex is subsequently bound by UvrC and the second UvrB is released. If no lesion is found, the DNA wraps around the other UvrB subunit that will check the other stand for damage. In Prochlorococcus marinus (strain MIT 9211), this protein is UvrABC system protein B.